Consider the following 950-residue polypeptide: Protocadherin alpha-9 (950 aa).

Residues 1–29 form the signal peptide; it reads MLYSSRGDPEGQPLLLSLLILAMWVVGSG. 6 Cadherin domains span residues 30-133, 134-242, 243-350, 351-455, 456-565, and 588-678; these read QLHY…PPVF, PATQ…APVF, DRTL…APQL, TIKT…APAF, AQSE…APAL, and GVVV…APKS. The Extracellular segment spans residues 30–697; it reads QLHYSVPEEA…GPEVTLVDVN (668 aa). Asparagine 254 and asparagine 265 each carry an N-linked (GlcNAc...) asparagine glycan. N-linked (GlcNAc...) asparagine glycosylation is present at asparagine 548. A helical transmembrane segment spans residues 698–718; sequence VYLIIAICAVSSLLVLTLLLY. Residues 719-950 are Cytoplasmic-facing; it reads TVLRCSAMPT…GNSTTDNSDQ (232 aa). A PXXP 1 repeat occupies 734–737; it reads PGKP. Residues 734 to 894 form a 5 X 4 AA repeats of P-X-X-P region; the sequence is PGKPTLVCSS…PDKFIIPGSP (161 aa). 3 disordered regions span residues 770 to 808, 827 to 856, and 871 to 950; these read MAFS…DWRY, ILRA…EVSP, and YGPG…NSDQ. Positions 789–798 are enriched in polar residues; the sequence is PSASSDSTGK. PXXP repeat units follow at residues 799–802, 832–835, 873–876, and 891–894; these read PRQP, PGGP, PGNP, and PGSP. Over residues 909–923 the composition is skewed to basic and acidic residues; sequence DKSDFITFGKKEETK.

It localises to the cell membrane. Functionally, potential calcium-dependent cell-adhesion protein. May be involved in the establishment and maintenance of specific neuronal connections in the brain. The protein is Protocadherin alpha-9 (PCDHA9) of Homo sapiens (Human).